Consider the following 387-residue polypeptide: Cobalt-precorrin-5B C(1)-methyltransferase (387 aa).

Belongs to the CbiD family.

The catalysed reaction is Co-precorrin-5B + S-adenosyl-L-methionine = Co-precorrin-6A + S-adenosyl-L-homocysteine. It functions in the pathway cofactor biosynthesis; adenosylcobalamin biosynthesis; cob(II)yrinate a,c-diamide from sirohydrochlorin (anaerobic route): step 6/10. Functionally, catalyzes the methylation of C-1 in cobalt-precorrin-5B to form cobalt-precorrin-6A. This chain is Cobalt-precorrin-5B C(1)-methyltransferase, found in Desulfitobacterium hafniense (strain Y51).